Here is an 879-residue protein sequence, read N- to C-terminus: Phosphoinositide 3-kinase regulatory subunit 5 (879 aa).

Residues 23–100 are heterodimerization; that stretch reads SGSTDISSNW…APYIPETSDL (78 aa). Disordered stretches follow at residues 314–345 and 570–590; these read SLEDDVTEEDEEVDFEEVDDKDEDGGKSPKQD and SSSTNAPMTNAESPLKSPSPS. A compositionally biased stretch (acidic residues) spans 315–336; it reads LEDDVTEEDEEVDFEEVDDKDE. The segment covering 570 to 589 has biased composition (polar residues); the sequence is SSSTNAPMTNAESPLKSPSP. The segment at 651 to 751 is interaction with beta-gamma G protein dimers; the sequence is PILADMVLYY…WSNGEKVCTS (101 aa).

As to quaternary structure, heterodimer. Interacts with a catalytic subunit and with beta-gamma G protein dimers.

It localises to the nucleus. It is found in the cytoplasm. Its subcellular location is the cell membrane. With respect to regulation, greatly activated by G gamma proteins. In terms of biological role, regulatory subunit of the PI3K gamma complex. Required for recruitment of the catalytic subunit to the plasma membrane via interaction with beta-gamma G protein dimers. Required for G protein-mediated activation of PIK3CG. The sequence is that of Phosphoinositide 3-kinase regulatory subunit 5 (pik3r5) from Xenopus laevis (African clawed frog).